A 490-amino-acid chain; its full sequence is 5'-3' exonuclease PLD3 (490 aa).

Residues 1-38 (MKPKLMYQELKVPAEEPANELPMNEIEAWKAAEKKARW) lie on the Cytoplasmic side of the membrane. A helical; Signal-anchor for type II membrane protein transmembrane segment spans residues 39 to 59 (VLLVLILAVVGFGALMTQLFL). Over 60–490 (WEYGDLHLFG…DSVGNACRLL (431 aa)) the chain is Lumenal. Cystine bridges form between cysteine 77/cysteine 239 and cysteine 81/cysteine 237. Residues asparagine 97 and asparagine 132 are each glycosylated (N-linked (GlcNAc...) asparagine). The region spanning 196-223 (THGVLHTKFWVVDQTHFYLGSANMDWRS) is the PLD phosphodiesterase 1 domain. Residues histidine 201, lysine 203, and aspartate 208 contribute to the active site. Catalysis depends on histidine 201, which acts as the Proton donor. 2 residues coordinate phosphate: histidine 201 and lysine 203. Asparagine 218 contributes to the phosphate binding site. Residues asparagine 236, asparagine 284, and asparagine 387 are each glycosylated (N-linked (GlcNAc...) asparagine). Cysteine 366 and cysteine 487 are oxidised to a cystine. Positions 411-437 (YARVNHNKYMVTERATYIGTSNWSGNY) constitute a PLD phosphodiesterase 2 domain. Histidine 416 contributes to the phosphate binding site. Catalysis depends on histidine 416, which acts as the Nucleophile. Mg(2+) is bound at residue phenylalanine 438.

This sequence belongs to the phospholipase D family. As to quaternary structure, homodimer. Interacts with APP. N-glycosylated. In terms of processing, proteolytically processed to a soluble active form that is stable within endosomes and lysosomes. During transport through the secretory pathway becomes proteolysed by cysteine proteases, thereby releasing a stable soluble lysosomal lumenal polypeptide, whereas the transmembrane-bound fragment is rapidly degraded. Its transport route to lysosomes involves ubiquitination and the ESCRT complex. Post-translationally, ubiquitinated at N-terminus. Ubiquitination mediates sorting into lysosomes. Widely expressed. In the brain, high levels of expression are detected in the frontal, temporal and occipital cortices and hippocampus. Expressed at low level in corpus callosum. Expressed in plasmacytoid dendritic cells and monocytes (at protein level).

It localises to the endoplasmic reticulum membrane. It is found in the lysosome lumen. The protein resides in the early endosome membrane. The protein localises to the late endosome membrane. Its subcellular location is the golgi apparatus membrane. It localises to the endosome membrane. The catalysed reaction is Exonucleolytic cleavage in the 5'- to 3'-direction to yield nucleoside 3'-phosphates.. It carries out the reaction a 5'-end 5'-dephospho-ribonucleotidyl-ribonucleotide-RNA + H2O = a ribonucleoside 3'-phosphate + a 5'-end dephospho-ribonucleoside-RNA + H(+). The enzyme catalyses a ribonucleoside 3'-phosphate-2'-3'-cyclophospho-GMP + H2O = a ribonucleoside 3'-phosphate + 2',3'-cyclophospho-GMP + H(+). It catalyses the reaction a 5'-end 5'-dephospho-2'-deoxyribonucleotidyl-2'-deoxyribonucleotide in single-stranded DNA + H2O = a 5'-end dephospho-2'-deoxyribonucleoside in single-stranded DNA + a 2'-deoxyribonucleoside 3'-phosphate + H(+). The catalysed reaction is a 5'-end 5'-phospho-2'-deoxyribonucleotide in single-stranded DNA + H2O = a 5'-end 5'-dephospho-2'-deoxyribonucleotide in single-stranded DNA + phosphate. It carries out the reaction a 3-lyso-sn-glycero-1-phospho-(3'-acyl-1'-sn-glycerol) + a 1-acyl-sn-glycerol = a 3-acyl-sn-glycero-1-phospho-(3'-acyl-1'-sn-glycerol) + glycerol. The enzyme catalyses 3-lyso-sn-glycero-1-phospho-(3'-(9Z-octadecenoyl)-1'-sn-glycerol) + 1-(9Z-octadecenoyl)-sn-glycerol = 3-(9Z-octadecenoyl)-sn-glycero-1-phospho-(3'-(9Z-octadecenoyl)-1'-sn-glycerol) + glycerol. The exonuclease activity toward ssDNA substrate is Ca(2+) and Mg(2+)-independent, but it is inhibited by Fe(2+), Cu(2+) and to a lesser extent Zn(2+) ions. 5'-&gt;3' exonuclease that hydrolyzes the phosphodiester bond of single-stranded DNA (ssDNA) and RNA molecules to form nucleoside 3'-monophosphates and 5'-end 5'-hydroxy deoxyribonucleotide/ribonucleotide fragments. Partially redundant with PLD4, can cleave all four nucleotides displaying higher efficiency for ssDNA and RNA fragments initiated with uridine and guanosine residues and lower efficiency for cytidine-initiated substrates. As a result, it does not always degrade polynucleotides to the single nucleotide level, it can stall at specific sites sparing certain fragments from exonucleolytic degradation. Processes self and pathogenic ssDNA and RNA molecules that reach the endolysosomal compartment via phagocytosis or autophagy and may serve as 'danger' signals for recognition by innate immune receptors such as toll-like receptors (TLRs). Degrades mitochondrial CpG-rich ssDNA fragments to prevent TLR9 activation and autoinflammatory response, but it can cleave viral RNA to generate ligands for TLR7 activation and initiate antiviral immune responses. In plasmacytoid dendritic cells, it cooperates with endonuclease RNASET2 to release 2',3'-cyclic guanosine monophosphate (2',3'-cGMP), a potent stimulatory ligand for TLR7. Produces 2',3'-cGMPs and cytidine-rich RNA fragments that occupy TLR7 ligand-binding pockets and trigger a signaling-competent state. Can exert polynucleotide phosphatase activity toward 5'-phosphorylated ssDNA substrates although at a slow rate. Transphosphatidylase that catalyzes the exchange with R to S stereo-inversion of the glycerol moiety between (S,R)-lysophosphatidylglycerol (LPG) and monoacylglycerol (MAG) substrates to yield (S,S)-bis(monoacylglycero)phosphate (BMP). Can synthesize a variety of (S,S)-BMPs representing the main phospholipid constituent of lysosomal intralumenal vesicle (ILV) membranes that bind acid hydrolases for lipid degradation. Regulates the homeostasis and interorganellar communication of the endolysosomal system with an overall impact on cellular removal of dysfunctional organelles via autophagy as well as proper protein and lipid turnover. May play a role in myotube formation in response to ER stress. The sequence is that of 5'-3' exonuclease PLD3 from Homo sapiens (Human).